The following is a 1046-amino-acid chain: Phospholipase D zeta 2 (1046 aa).

The 161-residue stretch at Pro-45–Ser-205 folds into the PX domain. A PH domain is found at Ser-215–Cys-343. In terms of domain architecture, PLD phosphodiesterase 1 spans Tyr-472–Arg-499. Active-site residues include His-477, Lys-479, and Asp-484. The span at Gly-653–Pro-667 shows a compositional bias: basic and acidic residues. Positions Gly-653–Asp-677 are disordered. One can recognise a PLD phosphodiesterase 2 domain in the interval Ser-847–Ser-874. Active-site residues include His-852, Lys-854, and Asp-859.

Belongs to the phospholipase D family. PXPH-PLD subfamily. It depends on Does not require Ca(2+) or any other cation for activity. as a cofactor. In terms of tissue distribution, expressed in seedlings, roots, leaves, stems and flowers. Highest expression in roots. Detected only in the meristematic regions up to 4 days after germination and then at later stages in all tissues.

It catalyses the reaction a 1,2-diacyl-sn-glycero-3-phosphocholine + H2O = a 1,2-diacyl-sn-glycero-3-phosphate + choline + H(+). Hydrolyzes glycerol-phospholipids at the terminal phosphodiesteric bond to generate phosphatidic acids (PA). Phosphatidylcholine-selective. Regulates vesicle trafficking and auxin responses. Required for the normal cycling of PIN-2 containing vesicles. Contributes to the supply of inorganic phosphorus for cell metabolism and diacylglycerol moieties for galactolipid synthesis in phosphorus-starved roots. Involved in root elongation during phosphate limitation. In Arabidopsis thaliana (Mouse-ear cress), this protein is Phospholipase D zeta 2.